The chain runs to 410 residues: Probable intron-encoded endonuclease bI1 (410 aa).

A COB exon 1 encoded region spans residues 1–131; sequence MRLLKTHPIL…VLMMAIAFLG (131 aa). 3 helical membrane passes run 32–52, 75–95, and 112–132; these read FGSL…FLAM, GWLI…FVYL, and LLWS…FLGF. Residues 132 to 410 form a COB intron 1 encoded region; it reads FNGQKYMCFY…KKNYIVKVIK (279 aa). Positions 196-286 constitute a GIY-YIG domain; it reads PFSGIYMIVN…LETLKPEYNI (91 aa).

To endonucleases of group I introns of fungi and phage. In terms of processing, the mature protein may arise from proteolytic cleavage of an in-frame translation of COB exon 1 plus intron 1, containing the bI1 open reading frame.

It localises to the mitochondrion. The protein localises to the membrane. In terms of biological role, mitochondrial DNA endonuclease involved in intron homing. The polypeptide is Probable intron-encoded endonuclease bI1 (bI1) (Mycosarcoma maydis (Corn smut fungus)).